The following is a 306-amino-acid chain: Formimidoylglutamase (306 aa).

A compositionally biased stretch (polar residues) spans 1-13 (MFQNATDWTPTST). A disordered region spans residues 1-36 (MFQNATDWTPTSTDPRDEQFGGVVEPVPTPSDADDY). Mn(2+) contacts are provided by Asn123, Asp147, His149, Asp151, Asp234, and Asp236.

It belongs to the arginase family. Mn(2+) serves as cofactor.

The catalysed reaction is N-formimidoyl-L-glutamate + H2O = formamide + L-glutamate. It functions in the pathway amino-acid degradation; L-histidine degradation into L-glutamate; L-glutamate from N-formimidoyl-L-glutamate (hydrolase route): step 1/1. Catalyzes the conversion of N-formimidoyl-L-glutamate to L-glutamate and formamide. The sequence is that of Formimidoylglutamase from Halobacterium salinarum (strain ATCC 29341 / DSM 671 / R1).